The primary structure comprises 441 residues: MTTVTRFAPSPTGYIHVGNLRTALMNWAIARKSGGTFILRLDDTDRERSKQEYSDGIMEDLEWLGLTWDRLERQSDRLDRYAEAADELRRAGRFYECFESPTELDLKRKKLLNMGKPPVYDRAALKLSDEERARLREERGGYWRFLLDQERIEWTDGILGPISIDAASVSDPVLIRADGQVLYTFASSVDDIDMGVTFIVRGGDHVTNTATQIQIMQALGGTPPSFAHHSLLTGAQGEALSKRLGTLSLRDLRARGVEPMALLSLMARLGSSQPVELFRTHEELLAGFDVGTFGAAPTKFDAEDLFPLTRHYVQGLPFEAVRGRIAALGVPDDLAEPFWRVAKDNIGVLEDLGGWWTLFSEGAEPQIDPEDEDFIRQAMTLLPPPPYGPESWAQFTAAVKEATGRKGKGLFMPLRKALTGQAHGPDMSEVMPLLQKVRAKG.

Residues 9-19 (PSPTGYIHVGN) carry the 'HIGH' region motif. The 'KMSKS' region motif lies at 239 to 243 (ALSKR). Position 242 (K242) interacts with ATP.

The protein belongs to the class-I aminoacyl-tRNA synthetase family. Glutamate--tRNA ligase type 1 subfamily. Monomer.

Its subcellular location is the cytoplasm. It carries out the reaction tRNA(Glu) + L-glutamate + ATP = L-glutamyl-tRNA(Glu) + AMP + diphosphate. Its function is as follows. Catalyzes the attachment of glutamate to tRNA(Glu) in a two-step reaction: glutamate is first activated by ATP to form Glu-AMP and then transferred to the acceptor end of tRNA(Glu). This chain is Glutamate--tRNA ligase 2, found in Cereibacter sphaeroides (strain ATCC 17023 / DSM 158 / JCM 6121 / CCUG 31486 / LMG 2827 / NBRC 12203 / NCIMB 8253 / ATH 2.4.1.) (Rhodobacter sphaeroides).